The primary structure comprises 702 residues: Rho GTPase-activating protein 22 (702 aa).

Positions 43–151 (PVLKAGWLRK…WVQAIRRVIW (109 aa)) constitute a PH domain. In terms of domain architecture, Rho-GAP spans 161–355 (QRLEDTVHHE…VLIRKHGQLF (195 aa)). Disordered regions lie at residues 360–433 (LEEP…HTLP), 438–457 (SFRQQGSRSESPKGVNSSLE), 480–511 (RASSGDRLKDTGSAQRLSTYDNVPPSSQFSST), and 555–596 (PSPL…TQAH). Phosphoserine occurs at positions 365 and 397. 4 stretches are compositionally biased toward polar residues: residues 407 to 421 (SRTSPPRLGSQTGPA), 438 to 456 (SFRQQGSRSESPKGVNSSL), 491 to 504 (GSAQRLSTYDNVPP), and 581 to 594 (SGSSEPNDPGSPTQ). A coiled-coil region spans residues 594–691 (QAHVRRCRAL…EEFFSTLGSL (98 aa)).

As to quaternary structure, interacts with VEZF1. In terms of tissue distribution, predominantly present in endothelial cells (at protein level).

The protein resides in the cytoplasm. Its subcellular location is the nucleus. Functionally, rho GTPase-activating protein involved in the signal transduction pathway that regulates endothelial cell capillary tube formation during angiogenesis. Acts as a GTPase activator for the RAC1 by converting it to an inactive GDP-bound state. Inhibits RAC1-dependent lamellipodia formation. May also play a role in transcription regulation via its interaction with VEZF1, by regulating activity of the endothelin-1 (EDN1) promoter. This Mus musculus (Mouse) protein is Rho GTPase-activating protein 22 (Arhgap22).